Consider the following 305-residue polypeptide: tRNA dimethylallyltransferase (305 aa).

11–18 is a binding site for ATP; that stretch reads GPTAVGKT. A substrate-binding site is contributed by 13–18; it reads TAVGKT. Residues 36–39 form an interaction with substrate tRNA region; the sequence is DSMQ.

It belongs to the IPP transferase family. In terms of assembly, monomer. Mg(2+) is required as a cofactor.

It carries out the reaction adenosine(37) in tRNA + dimethylallyl diphosphate = N(6)-dimethylallyladenosine(37) in tRNA + diphosphate. Functionally, catalyzes the transfer of a dimethylallyl group onto the adenine at position 37 in tRNAs that read codons beginning with uridine, leading to the formation of N6-(dimethylallyl)adenosine (i(6)A). This is tRNA dimethylallyltransferase from Listeria monocytogenes serovar 1/2a (strain ATCC BAA-679 / EGD-e).